Reading from the N-terminus, the 992-residue chain is Aminopeptidase Q (992 aa).

Residues 2–13 lie on the Cytoplasmic side of the membrane; sequence GPPSSSGFYVSR. Residues 14–34 traverse the membrane as a helical; Signal-anchor for type II membrane protein segment; it reads AVALLLAALAAALLLALAVLA. Residues 35 to 992 are Extracellular-facing; that stretch reads ALYGRCARVQ…RMTAWLRKNT (958 aa). A disordered region spans residues 47 to 92; the sequence is DLHHSGVPDAASSPRGTQEEPLPTWPPRPTREPAGTATPGHWRPPG. N-linked (GlcNAc...) asparagine glycosylation occurs at N133. E241 serves as a coordination point for substrate. N-linked (GlcNAc...) asparagine glycosylation is found at N262, N289, N347, and N361. Position 380 to 384 (380 to 384) interacts with substrate; sequence SAMEN. A Zn(2+)-binding site is contributed by H416. Residue E417 is the Proton acceptor of the active site. Zn(2+)-binding residues include H420 and E439. Y505 (proton donor) is an active-site residue. N-linked (GlcNAc...) asparagine glycosylation is found at N555, N584, N602, N609, N655, N811, N850, and N889.

It belongs to the peptidase M1 family. Zn(2+) is required as a cofactor. As to expression, expressed in skin. Expression levels do not differ between dark and light skin areas.

The protein resides in the membrane. Its function is as follows. Metalloprotease which may be important for placentation by regulating biological activity of key peptides at the embryo-maternal interface. Involved in coat pigmentation patterns. During skin development, may be required to establish the periodicity of tabby markings, initiating a pre-pattern at or before hair follicle development. This is Aminopeptidase Q (LVRN) from Felis catus (Cat).